A 290-amino-acid chain; its full sequence is ATP synthase gamma chain (290 aa).

It belongs to the ATPase gamma chain family. In terms of assembly, F-type ATPases have 2 components, CF(1) - the catalytic core - and CF(0) - the membrane proton channel. CF(1) has five subunits: alpha(3), beta(3), gamma(1), delta(1), epsilon(1). CF(0) has three main subunits: a, b and c.

It is found in the cell inner membrane. Produces ATP from ADP in the presence of a proton gradient across the membrane. The gamma chain is believed to be important in regulating ATPase activity and the flow of protons through the CF(0) complex. This is ATP synthase gamma chain from Dictyoglomus turgidum (strain DSM 6724 / Z-1310).